A 243-amino-acid polypeptide reads, in one-letter code: MSKLFIPYIMGDLNFIHHLKTLTENGADIVEIGVPFSDPVADGPIIMKAGRNAIDEGSNIKFIFDELIKNKNTISSKYVLMTYYNILSAYGEELFLDKCDEAGVYGLIIPDLPYELTKKFKKDFYHHSVKIISLIAMTASDARIMQIAKNSEGFIYTVTMNATTGNSGEFHPDLKRKIEYIKKVSKIPVVAGFGIKNPEHVKDIASVADGIVIGSEIVKRIEIDSRKEFITYIKSIRTTLNSL.

Catalysis depends on proton acceptor residues E31 and D42.

The protein belongs to the TrpA family. In terms of assembly, tetramer of two alpha and two beta chains.

It carries out the reaction (1S,2R)-1-C-(indol-3-yl)glycerol 3-phosphate + L-serine = D-glyceraldehyde 3-phosphate + L-tryptophan + H2O. Its pathway is amino-acid biosynthesis; L-tryptophan biosynthesis; L-tryptophan from chorismate: step 5/5. In terms of biological role, the alpha subunit is responsible for the aldol cleavage of indoleglycerol phosphate to indole and glyceraldehyde 3-phosphate. The polypeptide is Tryptophan synthase alpha chain (Staphylococcus epidermidis (strain ATCC 35984 / DSM 28319 / BCRC 17069 / CCUG 31568 / BM 3577 / RP62A)).